A 391-amino-acid polypeptide reads, in one-letter code: Na(+)/H(+) antiporter NhaA 1 (391 aa).

A run of 11 helical transmembrane segments spans residues 25-45 (AGGI…NSPL), 56-76 (VWLG…IFFL), 98-118 (ALPG…YIAI), 128-148 (GWAI…SLLG), 157-177 (VFLA…IAFF), 180-200 (AGLN…LIVM), 208-228 (LLPY…SGVH), 264-284 (VAFA…LAGI), 297-317 (VALG…VLAI), 335-355 (GVAM…NLAF), and 364-384 (EVKV…IVLL).

Belongs to the NhaA Na(+)/H(+) (TC 2.A.33) antiporter family.

The protein resides in the cell inner membrane. The enzyme catalyses Na(+)(in) + 2 H(+)(out) = Na(+)(out) + 2 H(+)(in). In terms of biological role, na(+)/H(+) antiporter that extrudes sodium in exchange for external protons. In Pseudomonas syringae pv. syringae (strain B728a), this protein is Na(+)/H(+) antiporter NhaA 1.